The primary structure comprises 514 residues: tRNA-2-methylthio-N(6)-dimethylallyladenosine synthase (514 aa).

Positions M1–A21 are disordered. One can recognise an MTTase N-terminal domain in the interval R68–L186. C77, C113, C147, C223, C227, and C230 together coordinate [4Fe-4S] cluster. Positions R209–A440 constitute a Radical SAM core domain. In terms of domain architecture, TRAM spans S442–K505.

Belongs to the methylthiotransferase family. MiaB subfamily. Monomer. [4Fe-4S] cluster is required as a cofactor.

The protein localises to the cytoplasm. The enzyme catalyses N(6)-dimethylallyladenosine(37) in tRNA + (sulfur carrier)-SH + AH2 + 2 S-adenosyl-L-methionine = 2-methylsulfanyl-N(6)-dimethylallyladenosine(37) in tRNA + (sulfur carrier)-H + 5'-deoxyadenosine + L-methionine + A + S-adenosyl-L-homocysteine + 2 H(+). Functionally, catalyzes the methylthiolation of N6-(dimethylallyl)adenosine (i(6)A), leading to the formation of 2-methylthio-N6-(dimethylallyl)adenosine (ms(2)i(6)A) at position 37 in tRNAs that read codons beginning with uridine. This is tRNA-2-methylthio-N(6)-dimethylallyladenosine synthase from Staphylococcus aureus (strain MRSA252).